The sequence spans 59 residues: Large ribosomal subunit protein uL30 (59 aa).

The protein belongs to the universal ribosomal protein uL30 family. Part of the 50S ribosomal subunit.

The polypeptide is Large ribosomal subunit protein uL30 (Haemophilus ducreyi (strain 35000HP / ATCC 700724)).